The primary structure comprises 950 residues: Leucine--tRNA ligase (950 aa).

Residues 42-52 (PYLNGNLHAGH) carry the 'HIGH' region motif. The short motif at 629–633 (KMSKS) is the 'KMSKS' region element. K632 is an ATP binding site. A disordered region spans residues 928–950 (NPPYDPKGRAQNAEPGRPAIYIE).

Belongs to the class-I aminoacyl-tRNA synthetase family.

Its subcellular location is the cytoplasm. The catalysed reaction is tRNA(Leu) + L-leucine + ATP = L-leucyl-tRNA(Leu) + AMP + diphosphate. The protein is Leucine--tRNA ligase of Methanothrix thermoacetophila (strain DSM 6194 / JCM 14653 / NBRC 101360 / PT) (Methanosaeta thermophila).